The primary structure comprises 427 residues: 3-phosphoshikimate 1-carboxyvinyltransferase (427 aa).

3-phosphoshikimate is bound by residues Lys-22, Ser-23, and Arg-27. Lys-22 provides a ligand contact to phosphoenolpyruvate. Phosphoenolpyruvate-binding residues include Gly-96 and Arg-124. 7 residues coordinate 3-phosphoshikimate: Ser-169, Ser-170, Gln-171, Ser-197, Asp-313, Asn-336, and Lys-340. Gln-171 contacts phosphoenolpyruvate. Catalysis depends on Asp-313, which acts as the Proton acceptor. Positions 344, 386, and 411 each coordinate phosphoenolpyruvate.

This sequence belongs to the EPSP synthase family. In terms of assembly, monomer.

The protein resides in the cytoplasm. It carries out the reaction 3-phosphoshikimate + phosphoenolpyruvate = 5-O-(1-carboxyvinyl)-3-phosphoshikimate + phosphate. Its pathway is metabolic intermediate biosynthesis; chorismate biosynthesis; chorismate from D-erythrose 4-phosphate and phosphoenolpyruvate: step 6/7. Functionally, catalyzes the transfer of the enolpyruvyl moiety of phosphoenolpyruvate (PEP) to the 5-hydroxyl of shikimate-3-phosphate (S3P) to produce enolpyruvyl shikimate-3-phosphate and inorganic phosphate. This is 3-phosphoshikimate 1-carboxyvinyltransferase from Salmonella heidelberg (strain SL476).